A 206-amino-acid polypeptide reads, in one-letter code: N-(5'-phosphoribosyl)anthranilate isomerase (206 aa).

The protein belongs to the TrpF family.

It catalyses the reaction N-(5-phospho-beta-D-ribosyl)anthranilate = 1-(2-carboxyphenylamino)-1-deoxy-D-ribulose 5-phosphate. It functions in the pathway amino-acid biosynthesis; L-tryptophan biosynthesis; L-tryptophan from chorismate: step 3/5. This chain is N-(5'-phosphoribosyl)anthranilate isomerase, found in Pseudomonas putida (strain GB-1).